We begin with the raw amino-acid sequence, 83 residues long: Small ribosomal subunit protein uS19m (83 aa).

The protein belongs to the universal ribosomal protein uS19 family.

The protein localises to the mitochondrion. In Tetraselmis subcordiformis (Marine green alga), this protein is Small ribosomal subunit protein uS19m (RPS19).